Consider the following 315-residue polypeptide: Deoxyribonuclease-1-like 1 (315 aa).

The signal sequence occupies residues 1-29 (MDSSGGFQKHTCGHALLLLLLLLAGGAEA). Catalysis depends on residues Glu-108 and His-159. An intrachain disulfide couples Cys-198 to Cys-235. An N-linked (GlcNAc...) asparagine glycan is attached at Asn-272.

The protein belongs to the DNase I family.

The protein localises to the endoplasmic reticulum. This chain is Deoxyribonuclease-1-like 1 (DNASE1L1), found in Sus scrofa (Pig).